The sequence spans 127 residues: uncharacterized protein (127 aa).

A signal peptide spans 1 to 16 (MIKKIIFGIAILLSTS). A lipid anchor (N-palmitoyl cysteine) is attached at C17. The S-diacylglycerol cysteine moiety is linked to residue C17. Residues 56-101 (EVREEIQKYRVAIVKINKKKRELYNRLSKEAQNFLAEQQKYKQKLS) are a coiled coil. A compositionally biased stretch (polar residues) spans 107 to 118 (VENDQKNNTADS). The disordered stretch occupies residues 107-127 (VENDQKNNTADSNDNKSKDTK).

The protein localises to the cell membrane. This is an uncharacterized protein from Rickettsia conorii (strain ATCC VR-613 / Malish 7).